The sequence spans 548 residues: Chaperonin GroEL (548 aa).

Residues 30-33, Lys-51, 87-91, Gly-415, 479-481, and Asp-495 contribute to the ATP site; these read TLGP, DGTTT, and NAA. A disordered region spans residues 525-548; the sequence is PKEDKTSDASSSPAGGMGGMGGMM. A compositionally biased stretch (gly residues) spans 539-548; the sequence is GGMGGMGGMM.

This sequence belongs to the chaperonin (HSP60) family. Forms a cylinder of 14 subunits composed of two heptameric rings stacked back-to-back. Interacts with the co-chaperonin GroES.

It is found in the cytoplasm. The enzyme catalyses ATP + H2O + a folded polypeptide = ADP + phosphate + an unfolded polypeptide.. In terms of biological role, together with its co-chaperonin GroES, plays an essential role in assisting protein folding. The GroEL-GroES system forms a nano-cage that allows encapsulation of the non-native substrate proteins and provides a physical environment optimized to promote and accelerate protein folding. The polypeptide is Chaperonin GroEL (Buchnera aphidicola subsp. Rhopalosiphum padi).